The sequence spans 437 residues: Eukaryotic peptide chain release factor subunit 1 (437 aa).

Ala-2 carries the N-acetylalanine modification. Residues 61 to 64 (NIKS) carry the NIKS motif; plays an important role in translational termination motif. Position 63 is a 4-hydroxylysine (Lys-63). Residue Lys-87 forms a Glycyl lysine isopeptide (Lys-Gly) (interchain with G-Cter in SUMO2) linkage. N5-methylglutamine is present on Gln-185. The residue at position 347 (Thr-347) is a Phosphothreonine. Residue Lys-404 forms a Glycyl lysine isopeptide (Lys-Gly) (interchain with G-Cter in SUMO2) linkage.

Belongs to the eukaryotic release factor 1 family. As to quaternary structure, component of the eRF1-eRF3-GTP ternary complex, composed of ETF1/ERF1 and eRF3 (GSPT1/ERF3A or GSPT2/ERF3B) and GTP. Component of the transient SURF (SMG1-UPF1-eRF1-eRF3) complex. Interacts with JMJD4. The ETF1-GSPT1 complex interacts with JMJD4. Hydroxylation at Lys-63 by JMJD4 promotes its translational termination efficiency. Post-translationally, methylated at Gln-185 by N6AMT1. In terms of processing, ubiquitinated via 'Lys-6'-linked polyubiquitin chains by RNF14 and RNF25 in response to ribosome collisions (ribosome stalling), leading to its degradation by the proteasome and rescue of stalled ribosomes.

The protein resides in the cytoplasm. Component of the eRF1-eRF3-GTP ternary complex, a ternary complex that mediates translation termination in response to the termination codons. The eRF1-eRF3-GTP complex binds to a stop codon in the ribosomal A-site. ETF1/ERF1 is responsible for stop codon recognition and inducing hydrolysis of peptidyl-tRNA. Following GTP hydrolysis, eRF3 (GSPT1/ERF3A or GSPT2/ERF3B) dissociates, permitting ETF1/eRF1 to accommodate fully in the A-site, followed by hydrolysis of peptidyl-tRNA. Component of the transient SURF complex which recruits UPF1 to stalled ribosomes in the context of nonsense-mediated decay (NMD) of mRNAs containing premature stop codons. Required for SHFL-mediated translation termination which inhibits programmed ribosomal frameshifting (-1PRF) of mRNA from viruses and cellular genes. This is Eukaryotic peptide chain release factor subunit 1 (ETF1) from Pongo abelii (Sumatran orangutan).